We begin with the raw amino-acid sequence, 384 residues long: Na(+)/H(+) antiporter NhaA (384 aa).

Transmembrane regions (helical) follow at residues 17 to 37 (SGLF…SAIA), 53 to 73 (LEYW…GLEL), 89 to 109 (MLPI…FLVM), 118 to 138 (GAGI…SLLG), 147 to 167 (IFLT…IAVF), 171 to 191 (TLLW…LILN), 198 to 218 (LIPY…SGVH), 251 to 271 (PVAF…VLSS), 283 to 303 (IGIA…LSML), 321 to 341 (ILAV…ITLL), and 354 to 374 (FVIL…LKYV).

The protein belongs to the NhaA Na(+)/H(+) (TC 2.A.33) antiporter family.

Its subcellular location is the cell inner membrane. The enzyme catalyses Na(+)(in) + 2 H(+)(out) = Na(+)(out) + 2 H(+)(in). In terms of biological role, na(+)/H(+) antiporter that extrudes sodium in exchange for external protons. The polypeptide is Na(+)/H(+) antiporter NhaA (Flavobacterium psychrophilum (strain ATCC 49511 / DSM 21280 / CIP 103535 / JIP02/86)).